Here is a 234-residue protein sequence, read N- to C-terminus: Orotidine 5'-phosphate decarboxylase (234 aa).

Substrate is bound by residues Asp10, Lys31, 58–67 (DLKLHDIPNT), Thr121, Arg183, Gln192, Gly212, and Arg213. Residue Lys60 is the Proton donor of the active site.

It belongs to the OMP decarboxylase family. Type 1 subfamily. In terms of assembly, homodimer.

The enzyme catalyses orotidine 5'-phosphate + H(+) = UMP + CO2. It functions in the pathway pyrimidine metabolism; UMP biosynthesis via de novo pathway; UMP from orotate: step 2/2. Its function is as follows. Catalyzes the decarboxylation of orotidine 5'-monophosphate (OMP) to uridine 5'-monophosphate (UMP). The chain is Orotidine 5'-phosphate decarboxylase from Halalkalibacterium halodurans (strain ATCC BAA-125 / DSM 18197 / FERM 7344 / JCM 9153 / C-125) (Bacillus halodurans).